Reading from the N-terminus, the 452-residue chain is UPF0210 protein CHY_1509 (452 aa).

The protein belongs to the UPF0210 family. In terms of assembly, homodimer.

In Carboxydothermus hydrogenoformans (strain ATCC BAA-161 / DSM 6008 / Z-2901), this protein is UPF0210 protein CHY_1509.